The primary structure comprises 75 residues: Dermaseptin-S11 (75 aa).

Residues 1-22 form the signal peptide; sequence MAFLKKSLFLVLFLGMVSLSIC. The propeptide occupies 23–45; the sequence is EEEKRENEDEEEQEDDEQSEEKR. Residues 25–44 are disordered; it reads EKRENEDEEEQEDDEQSEEK. Acidic residues predominate over residues 30–41; the sequence is EDEEEQEDDEQS.

This sequence belongs to the frog skin active peptide (FSAP) family. Dermaseptin subfamily. Expressed by the skin glands.

It is found in the secreted. The protein resides in the target cell membrane. In terms of biological role, antimicrobial peptide with activity against Gram-positive and Gram-negative bacteria, and fungi. Has hemolytic activity. The sequence is that of Dermaseptin-S11 from Phyllomedusa sauvagei (Sauvage's leaf frog).